The following is a 220-amino-acid chain: Redox-sensing transcriptional repressor Rex (220 aa).

A DNA-binding region (H-T-H motif) is located at residues 17–56; the sequence is LYARSLRYLLQEGVESVSSQELGDRINVTAAQIRKDLSYF. 91-96 is a binding site for NAD(+); it reads GIGHLG.

The protein belongs to the transcriptional regulatory Rex family. Homodimer.

It localises to the cytoplasm. Its function is as follows. Modulates transcription in response to changes in cellular NADH/NAD(+) redox state. This Roseiflexus sp. (strain RS-1) protein is Redox-sensing transcriptional repressor Rex.